We begin with the raw amino-acid sequence, 525 residues long: GMP synthase [glutamine-hydrolyzing] (525 aa).

Positions 3–200 (KILILDFGSQ…VLHVAGCKPS (198 aa)) constitute a Glutamine amidotransferase type-1 domain. The Nucleophile role is filled by Cys-79. Residues His-174 and Glu-176 contribute to the active site. A GMPS ATP-PPase domain is found at 201–393 (WTMPNYIDEA…LGLPHDMVYR (193 aa)). ATP is bound at residue 228–234 (SGGVDSS).

As to quaternary structure, homodimer.

It catalyses the reaction XMP + L-glutamine + ATP + H2O = GMP + L-glutamate + AMP + diphosphate + 2 H(+). It functions in the pathway purine metabolism; GMP biosynthesis; GMP from XMP (L-Gln route): step 1/1. Its function is as follows. Catalyzes the synthesis of GMP from XMP. This is GMP synthase [glutamine-hydrolyzing] from Chromobacterium violaceum (strain ATCC 12472 / DSM 30191 / JCM 1249 / CCUG 213 / NBRC 12614 / NCIMB 9131 / NCTC 9757 / MK).